A 669-amino-acid polypeptide reads, in one-letter code: DNA ligase (669 aa).

NAD(+) contacts are provided by residues 34–38, 83–84, and Glu-114; these read DAEYD and SL. Lys-116 serves as the catalytic N6-AMP-lysine intermediate. 4 residues coordinate NAD(+): Arg-137, Glu-171, Lys-287, and Lys-311. Residues Cys-405, Cys-408, Cys-423, and Cys-428 each coordinate Zn(2+). Positions 591-669 constitute a BRCT domain; sequence NVESYFAGKT…EERFLQELNK (79 aa).

The protein belongs to the NAD-dependent DNA ligase family. LigA subfamily. The cofactor is Mg(2+). Mn(2+) is required as a cofactor.

The catalysed reaction is NAD(+) + (deoxyribonucleotide)n-3'-hydroxyl + 5'-phospho-(deoxyribonucleotide)m = (deoxyribonucleotide)n+m + AMP + beta-nicotinamide D-nucleotide.. Functionally, DNA ligase that catalyzes the formation of phosphodiester linkages between 5'-phosphoryl and 3'-hydroxyl groups in double-stranded DNA using NAD as a coenzyme and as the energy source for the reaction. It is essential for DNA replication and repair of damaged DNA. The sequence is that of DNA ligase from Bacillus mycoides (strain KBAB4) (Bacillus weihenstephanensis).